A 345-amino-acid chain; its full sequence is uncharacterized protein (345 aa).

This is an uncharacterized protein from Acidianus filamentous virus 2 (isolate Italy/Pozzuoli) (AFV-2).